Here is a 419-residue protein sequence, read N- to C-terminus: Gamma-glutamyl phosphate reductase (419 aa).

Belongs to the gamma-glutamyl phosphate reductase family.

It is found in the cytoplasm. It catalyses the reaction L-glutamate 5-semialdehyde + phosphate + NADP(+) = L-glutamyl 5-phosphate + NADPH + H(+). The protein operates within amino-acid biosynthesis; L-proline biosynthesis; L-glutamate 5-semialdehyde from L-glutamate: step 2/2. In terms of biological role, catalyzes the NADPH-dependent reduction of L-glutamate 5-phosphate into L-glutamate 5-semialdehyde and phosphate. The product spontaneously undergoes cyclization to form 1-pyrroline-5-carboxylate. The chain is Gamma-glutamyl phosphate reductase from Caldicellulosiruptor saccharolyticus (strain ATCC 43494 / DSM 8903 / Tp8T 6331).